A 480-amino-acid polypeptide reads, in one-letter code: Type II methyltransferase M.NspV (480 aa).

Belongs to the methyltransferase superfamily.

A gamma subtype methylase that recognizes the double-stranded sequence 5'-TTCGAA-3', and methylates it on an unknown base to protect it against the NspV endonuclease. The sequence is that of Type II methyltransferase M.NspV from Nostoc sp. (strain ATCC 29411 / PCC 7524).